The primary structure comprises 298 residues: Centromere protein O (298 aa).

The disordered stretch occupies residues 29-49 (NISNRKSEEPAVRKKESSLRT). Over residues 33-49 (RKSEEPAVRKKESSLRT) the composition is skewed to basic and acidic residues. Serine 35 bears the Phosphoserine mark. Positions 39 to 74 (AVRKKESSLRTKIRELRQQRDKLRAEVKQWGARVKE) form a coiled coil.

This sequence belongs to the CENP-O/MCM21 family. As to quaternary structure, component of the CENPA-CAD complex, composed of CENPI, CENPK, CENPL, CENPO, CENPP, CENPQ, CENPR and CENPS. The CENPA-CAD complex interacts with the CENPA-NAC complex, at least composed of CENPA, CENPC, CENPH, CENPM, CENPN, CENPT and CENPU.

The protein localises to the nucleus. It is found in the chromosome. Its subcellular location is the centromere. The protein resides in the kinetochore. Component of the CENPA-CAD (nucleosome distal) complex, a complex recruited to centromeres which is involved in assembly of kinetochore proteins, mitotic progression and chromosome segregation. May be involved in incorporation of newly synthesized CENPA into centromeres via its interaction with the CENPA-NAC complex. Modulates the kinetochore-bound levels of NDC80 complex. The sequence is that of Centromere protein O (Cenpo) from Mus musculus (Mouse).